The following is a 247-amino-acid chain: Adenosylcobinamide-GDP ribazoletransferase (247 aa).

6 helical membrane-spanning segments follow: residues isoleucine 34–leucine 54, cysteine 59–phenylalanine 79, glycine 113–leucine 133, methionine 138–tyrosine 158, valine 171–valine 191, and valine 194–isoleucine 214.

Belongs to the CobS family. Mg(2+) serves as cofactor.

It is found in the cell inner membrane. The catalysed reaction is alpha-ribazole + adenosylcob(III)inamide-GDP = adenosylcob(III)alamin + GMP + H(+). The enzyme catalyses alpha-ribazole 5'-phosphate + adenosylcob(III)inamide-GDP = adenosylcob(III)alamin 5'-phosphate + GMP + H(+). It participates in cofactor biosynthesis; adenosylcobalamin biosynthesis; adenosylcobalamin from cob(II)yrinate a,c-diamide: step 7/7. In terms of biological role, joins adenosylcobinamide-GDP and alpha-ribazole to generate adenosylcobalamin (Ado-cobalamin). Also synthesizes adenosylcobalamin 5'-phosphate from adenosylcobinamide-GDP and alpha-ribazole 5'-phosphate. This Salmonella paratyphi A (strain ATCC 9150 / SARB42) protein is Adenosylcobinamide-GDP ribazoletransferase.